The sequence spans 119 residues: Centrocin 1 (119 aa).

The first 20 residues, 1–20 (MMIKIAVVLCAVMATTMVRA), serve as a signal peptide directing secretion. Residues 21–50 (KYVEEQELADLLDLLISEEVSSPDDAVALQ) constitute a propeptide that is removed on maturation. Trp52 and Trp53 each carry 6'-bromotryptophan. Residues Cys75 and Cys110 are joined by a disulfide bond. The propeptide occupies 81 to 104 (SPQEARAKVLEAFPEMKEADLDEE). An Asparagine amide modification is found at Asn117.

As to quaternary structure, heterodimer of a light and a heavy chain, probably disulfide-linked.

Functionally, has antimicrobial activity against Gram-negative bacteria, Gram-positive bacteria and against fungi with minimum inhibitory concentration (MIC) between 0.78 uM and 50 uM. Shows little hemolytic activity even at a concentration of 100 uM. Its function is as follows. Has no antimicrobial activity. Shows no hemolytic activity. The sequence is that of Centrocin 1 from Echinus esculentus (Sea urchin).